A 567-amino-acid chain; its full sequence is Oxygen-dependent choline dehydrogenase (567 aa).

FAD is bound at residue D6–E35. Residues Q182–A203 form a disordered region. The active-site Proton acceptor is H475.

The protein belongs to the GMC oxidoreductase family. It depends on FAD as a cofactor.

It catalyses the reaction choline + A = betaine aldehyde + AH2. It carries out the reaction betaine aldehyde + NAD(+) + H2O = glycine betaine + NADH + 2 H(+). Its pathway is amine and polyamine biosynthesis; betaine biosynthesis via choline pathway; betaine aldehyde from choline (cytochrome c reductase route): step 1/1. Its function is as follows. Involved in the biosynthesis of the osmoprotectant glycine betaine. Catalyzes the oxidation of choline to betaine aldehyde and betaine aldehyde to glycine betaine at the same rate. The polypeptide is Oxygen-dependent choline dehydrogenase (Pseudomonas fluorescens (strain ATCC BAA-477 / NRRL B-23932 / Pf-5)).